Consider the following 111-residue polypeptide: Ribonuclease P protein component (111 aa).

It belongs to the RnpA family. In terms of assembly, consists of a catalytic RNA component (M1 or rnpB) and a protein subunit.

The catalysed reaction is Endonucleolytic cleavage of RNA, removing 5'-extranucleotides from tRNA precursor.. In terms of biological role, RNaseP catalyzes the removal of the 5'-leader sequence from pre-tRNA to produce the mature 5'-terminus. It can also cleave other RNA substrates such as 4.5S RNA. The protein component plays an auxiliary but essential role in vivo by binding to the 5'-leader sequence and broadening the substrate specificity of the ribozyme. The sequence is that of Ribonuclease P protein component from Streptococcus thermophilus (strain ATCC BAA-491 / LMD-9).